The sequence spans 95 residues: Co-chaperonin GroES (95 aa).

This sequence belongs to the GroES chaperonin family. In terms of assembly, heptamer of 7 subunits arranged in a ring. Interacts with the chaperonin GroEL.

The protein resides in the cytoplasm. Functionally, together with the chaperonin GroEL, plays an essential role in assisting protein folding. The GroEL-GroES system forms a nano-cage that allows encapsulation of the non-native substrate proteins and provides a physical environment optimized to promote and accelerate protein folding. GroES binds to the apical surface of the GroEL ring, thereby capping the opening of the GroEL channel. In Rickettsia prowazekii (strain Madrid E), this protein is Co-chaperonin GroES.